Reading from the N-terminus, the 162-residue chain is uncharacterized protein (162 aa).

3 consecutive Pentapeptide repeat domains span residues 33–72 (ASLIGAQLIFVDLGGANLTRAQLDSATLKNANLALANMTE), 73–112 (VCLIYADLSNADLSGANLVGADLTNADLSGAKLGGADLRK), and 113–152 (ANLSEASLRGADLRGVNLIEANLTNTDFSEADLTGAYISD).

This is an uncharacterized protein from Synechocystis sp. (strain ATCC 27184 / PCC 6803 / Kazusa).